An 816-amino-acid polypeptide reads, in one-letter code: Two pore channel protein 1 (816 aa).

Residues 1 to 112 (MAVSLDDDVP…AHNHLFYLME (112 aa)) are Cytoplasmic-facing. Residues 17–64 (EGGSAPLAPSNGLGQEELPSKNGGSYAIHDSQAPSLSSGGESSPSSPA) form a disordered region. The span at 50-63 (PSLSSGGESSPSSP) shows a compositional bias: low complexity. Residues 113 to 133 (LATALLLLLLSLCEAPAVPAL) form a helical membrane-spanning segment. A topological domain (extracellular) is located at residue R134. Residues 135-155 (LGIYVHATLELFALMVVVFEL) form a helical membrane-spanning segment. Over 156-177 (CMKLRWLGLHTFIRHKRTMVKT) the chain is Cytoplasmic. The helical transmembrane segment at 178–198 (SVLVVQFVEAIVVLVRQMSHV) threads the bilayer. Topologically, residues 199–200 (RV) are extracellular. A helical transmembrane segment spans residues 201–220 (TRALRCIFLVDCRYCGGVRR). The Cytoplasmic segment spans residues 221–234 (NLRQIFQSLPPFMD). The helical transmembrane segment at 235–255 (ILLLLLFFMIIFAILGFYLFS) threads the bilayer. Over 256 to 262 (PNPSDPY) the chain is Extracellular. The segment at residues 263-286 (FSTLENSIVSLFVLLTTANFPDVM) is an intramembrane region (helical; Pore-forming). Topologically, residues 287-294 (MPSYSRNP) are extracellular. Residues 295–315 (WSCVFFIVYLSIELYFIMNLL) form a helical membrane-spanning segment. Residues 316–444 (LAVVFDTFND…NILVKSKAFQ (129 aa)) lie on the Cytoplasmic side of the membrane. The helical transmembrane segment at 445-465 (YFMYLVVAVNGVWILVETFML) threads the bilayer. Residues 466–479 (KGGNFFSKHVPWSY) are Extracellular-facing. A helical membrane pass occupies residues 480–500 (LVFLTIYGVELFLKVAGLGPV). Over 501 to 503 (EYL) the chain is Cytoplasmic. A helical membrane pass occupies residues 504–526 (SSGWNLFDFSVTVFAFLGLLALA). At 527–534 (LNMEPFYF) the chain is on the extracellular side. A helical membrane pass occupies residues 535–549 (IVVLRPLQLLRLFKL). Topologically, residues 550-573 (KERYRNVLDTMFELLPRMASLGLT) are cytoplasmic. A helical membrane pass occupies residues 574 to 594 (LLIFYYSFAIVGMEFFCGIVF). Residues 595–629 (PNCCNTSTVADAYRWRNHTVGNRTVVEEGYYYLNN) lie on the Extracellular side of the membrane. N599, N611, and N616 each carry an N-linked (GlcNAc...) asparagine glycan. Residues 630–653 (FDNILNSFVTLFELTVVNNWYIIM) constitute an intramembrane region (helical; Pore-forming). Topologically, residues 654 to 670 (EGVTSQTSHWSRLYFMT) are extracellular. The helical transmembrane segment at 671–691 (FYIVTMVVMTIIVAFILEAFV) threads the bilayer. Topologically, residues 692–816 (FRMNYSRKNQ…GSRQRSQTVT (125 aa)) are cytoplasmic. The stretch at 769–796 (SLKMYQEEIQEWYEEHAREQEQQRQLSS) forms a coiled coil. The segment at 782-816 (EEHAREQEQQRQLSSSAAPAAQQPPGSRQRSQTVT) is disordered. The segment covering 791-816 (QRQLSSSAAPAAQQPPGSRQRSQTVT) has biased composition (low complexity).

It belongs to the calcium channel alpha-1 subunit (TC 1.A.1.11) family. Two pore calcium channel subfamily. In terms of assembly, dimer. Interacts with MTOR; the interaction is required for TPCN1 ATP sensitivity. Interacts with STX7, STX8 and STX12. Interacts with JPT2. Found in a complex with LSM12, TPCN1 and TPCN2. Post-translationally, N-glycosylated. In terms of tissue distribution, highest expression found in the heart and kidney, and lowest expression found in the spleen.

It localises to the lysosome membrane. The protein resides in the endosome membrane. It is found in the early endosome membrane. Its subcellular location is the recycling endosome membrane. It carries out the reaction Na(+)(in) = Na(+)(out). It catalyses the reaction Ca(2+)(in) = Ca(2+)(out). Na(+) current is inhibited by ATP in a MTORC-dependent manner. ATP sensitivity is independent of PI(3,5)P2. Probably regulated by Mg(2+) ions, cytosolic Mg(2+) selectively inhibits outward current while lysosomal Mg(2+) modestly inhibits both the outward and inward currents. In the absence of Mg(2+), NAADP readily activates TPCN2, with properties similar to PI(3,5)P2. Both current elicited by PI(3,5)P2 as well as NAADP are inhibited by tetrandrine. Intracellular channel initially characterized as a non-selective Ca(2+)-permeable channel activated by NAADP (nicotinic acid adenine dinucleotide phosphate), it is also a voltage-gated highly-selective Na(+) channel activated directly by PI(3,5)P2 (phosphatidylinositol 3,5-bisphosphate) that senses pH changes and confers electrical excitability to organelles. Localizes to the early and recycling endosomes membranes where it plays a role in the uptake and processing of proteins and regulates organellar membrane excitability, membrane trafficking and pH homeostasis. Ion selectivity is not fixed but rather agonist-dependent and under defined ionic conditions, can be readily activated by both NAADP and PI(3,5)P2. Required for mTOR-dependent nutrient sensing. In terms of biological role, (Microbial infection) During Ebola virus (EBOV) infection, controls the movement of endosomes containing virus particles and is required by EBOV to escape from the endosomal network into the cell cytoplasm. This chain is Two pore channel protein 1, found in Homo sapiens (Human).